The chain runs to 227 residues: MNLSFFDQFASPQLLGIPLILLSLLFPTLLLPSPNNRWINNRLSTLQLWFLQLITKQLMMPLNKAGHKWALILTSLMTFLLLINLLGLLPYTFTPTTQLSMNMALAFPLWLATLLTGLRNQPSISLGHLLPEGTPTPLIPALILIETTSLLIRPLALGVRLTANLTAGHLLIQLISTATLALLPTMPTISVLTATVLLLLTILELAVAMIQAYVFVLLLSLYLQENI.

A run of 6 helical transmembrane segments spans residues 14-34 (LLGIPLILLSLLFPTLLLPSP), 69-89 (WALILTSLMTFLLLINLLGLL), 98-118 (QLSMNMALAFPLWLATLLTGL), 139-159 (IPALILIETTSLLIRPLALGV), 174-194 (LISTATLALLPTMPTISVLTA), and 196-216 (VLLLLTILELAVAMIQAYVFV).

The protein belongs to the ATPase A chain family. In terms of assembly, component of the ATP synthase complex composed at least of ATP5F1A/subunit alpha, ATP5F1B/subunit beta, ATP5MC1/subunit c (homooctomer), MT-ATP6/subunit a, MT-ATP8/subunit 8, ATP5ME/subunit e, ATP5MF/subunit f, ATP5MG/subunit g, ATP5MK/subunit k, ATP5MJ/subunit j, ATP5F1C/subunit gamma, ATP5F1D/subunit delta, ATP5F1E/subunit epsilon, ATP5PF/subunit F6, ATP5PB/subunit b, ATP5PD/subunit d, ATP5PO/subunit OSCP. ATP synthase complex consists of a soluble F(1) head domain (subunits alpha(3) and beta(3)) - the catalytic core - and a membrane F(0) domain - the membrane proton channel (subunits c, a, 8, e, f, g, k and j). These two domains are linked by a central stalk (subunits gamma, delta, and epsilon) rotating inside the F1 region and a stationary peripheral stalk (subunits F6, b, d, and OSCP). Interacts with DNAJC30; interaction is direct.

It is found in the mitochondrion inner membrane. It carries out the reaction H(+)(in) = H(+)(out). Subunit a, of the mitochondrial membrane ATP synthase complex (F(1)F(0) ATP synthase or Complex V) that produces ATP from ADP in the presence of a proton gradient across the membrane which is generated by electron transport complexes of the respiratory chain. ATP synthase complex consist of a soluble F(1) head domain - the catalytic core - and a membrane F(1) domain - the membrane proton channel. These two domains are linked by a central stalk rotating inside the F(1) region and a stationary peripheral stalk. During catalysis, ATP synthesis in the catalytic domain of F(1) is coupled via a rotary mechanism of the central stalk subunits to proton translocation. With the subunit c (ATP5MC1), forms the proton-conducting channel in the F(0) domain, that contains two crucial half-channels (inlet and outlet) that facilitate proton movement from the mitochondrial intermembrane space (IMS) into the matrix. Protons are taken up via the inlet half-channel and released through the outlet half-channel, following a Grotthuss mechanism. This Struthio camelus (Common ostrich) protein is ATP synthase F(0) complex subunit a.